Consider the following 637-residue polypeptide: Chaperone protein HtpG (637 aa).

The tract at residues 1–338 is a; substrate-binding; it reads MTSTIDKNGA…SADLPLNISR (338 aa). The b stretch occupies residues 339 to 552; it reads EMIQESPILA…ESGPDRQLEK (214 aa). Positions 553 to 637 are c; that stretch reads ILLGVGQLAG…LRRSSAGGGD (85 aa).

This sequence belongs to the heat shock protein 90 family. As to quaternary structure, homodimer.

It localises to the cytoplasm. Molecular chaperone. Has ATPase activity. The protein is Chaperone protein HtpG of Nitrobacter winogradskyi (strain ATCC 25391 / DSM 10237 / CIP 104748 / NCIMB 11846 / Nb-255).